The following is a 179-amino-acid chain: 3-hydroxyanthranilate 3,4-dioxygenase 2 (179 aa).

Arg44 is a binding site for O2. 3 residues coordinate Fe cation: His48, Glu60, and His99. Glu60 contacts substrate. The substrate site is built by Arg103 and Glu113.

Belongs to the 3-HAO family. It depends on Fe(2+) as a cofactor.

It is found in the cytoplasm. It catalyses the reaction 3-hydroxyanthranilate + O2 = (2Z,4Z)-2-amino-3-carboxymuconate 6-semialdehyde. It functions in the pathway cofactor biosynthesis; NAD(+) biosynthesis; quinolinate from L-kynurenine: step 3/3. Catalyzes the oxidative ring opening of 3-hydroxyanthranilate to 2-amino-3-carboxymuconate semialdehyde, which spontaneously cyclizes to quinolinate. The protein is 3-hydroxyanthranilate 3,4-dioxygenase 2 (bna1-2) of Aspergillus oryzae (strain ATCC 42149 / RIB 40) (Yellow koji mold).